A 155-amino-acid polypeptide reads, in one-letter code: Small ribosomal subunit protein uS7cz/uS7cy (155 aa).

It belongs to the universal ribosomal protein uS7 family. Part of the 30S ribosomal subunit.

It localises to the plastid. It is found in the chloroplast. One of the primary rRNA binding proteins, it binds directly to 16S rRNA where it nucleates assembly of the head domain of the 30S subunit. The chain is Small ribosomal subunit protein uS7cz/uS7cy (rps7-A) from Morus indica (Mulberry).